A 424-amino-acid polypeptide reads, in one-letter code: Glutamate-1-semialdehyde 2,1-aminomutase (424 aa).

Lys260 is modified (N6-(pyridoxal phosphate)lysine).

The protein belongs to the class-III pyridoxal-phosphate-dependent aminotransferase family. HemL subfamily. Pyridoxal 5'-phosphate serves as cofactor.

Its subcellular location is the cytoplasm. It catalyses the reaction (S)-4-amino-5-oxopentanoate = 5-aminolevulinate. It participates in porphyrin-containing compound metabolism; protoporphyrin-IX biosynthesis; 5-aminolevulinate from L-glutamyl-tRNA(Glu): step 2/2. In Nitrosopumilus maritimus (strain SCM1), this protein is Glutamate-1-semialdehyde 2,1-aminomutase.